The chain runs to 115 residues: Mediator of RNA polymerase II transcription subunit 11 (115 aa).

Residues 56–107 adopt a coiled-coil conformation; it reads YERLDKSTTQLRKEIQLLDENVGTRLLPINVNKKALGQDTEKMEEQLDLLSA.

The protein belongs to the mediator complex subunit 11 family. In terms of assembly, component of the Mediator complex, which is composed of at least 21 subunits that form three structurally distinct submodules. The Mediator head module contains MED6, MED8, MED11, SRB4/MED17, SRB5/MED18, ROX3/MED19, SRB2/MED20 and SRB6/MED22, the middle module contains MED1, MED4, NUT1/MED5, MED7, CSE2/MED9, NUT2/MED10, SRB7/MED21 and SOH1/MED31, and the tail module contains MED2, PGD1/MED3, RGR1/MED14, GAL11/MED15 and SIN4/MED16. The head and the middle modules interact directly with RNA polymerase II, whereas the elongated tail module interacts with gene-specific regulatory proteins. MED11 forms a heterodimer with SRB6/MED22. The MED11/22 heterodimer binds to and stabilizes the central head subunit SRB4/MED17. Interacts with TFIIH subunit RAD3.

The protein resides in the nucleus. Component of the Mediator complex, a coactivator involved in the regulated transcription of nearly all RNA polymerase II-dependent genes. Mediator functions as a bridge to convey information from gene-specific regulatory proteins to the basal RNA polymerase II transcription machinery. The Mediator complex, having a compact conformation in its free form, is recruited to promoters by direct interactions with regulatory proteins and serves for the assembly of a functional pre-initiation complex (PIC) with RNA polymerase II and the general transcription factors. The Mediator complex unfolds to an extended conformation and partially surrounds RNA polymerase II, specifically interacting with the unphosphorylated form of the C-terminal domain (CTD) of RNA polymerase II. The Mediator complex dissociates from the RNA polymerase II holoenzyme and stays at the promoter when transcriptional elongation begins. The essential MED11/22 heterodimer specifically functions in promoting stable PIC formation. The chain is Mediator of RNA polymerase II transcription subunit 11 (MED11) from Saccharomyces cerevisiae (strain ATCC 204508 / S288c) (Baker's yeast).